The chain runs to 96 residues: Large ribosomal subunit protein uL23 (96 aa).

It belongs to the universal ribosomal protein uL23 family. Part of the 50S ribosomal subunit. Contacts protein L29, and trigger factor when it is bound to the ribosome.

Its function is as follows. One of the early assembly proteins it binds 23S rRNA. One of the proteins that surrounds the polypeptide exit tunnel on the outside of the ribosome. Forms the main docking site for trigger factor binding to the ribosome. The sequence is that of Large ribosomal subunit protein uL23 from Syntrophus aciditrophicus (strain SB).